The chain runs to 378 residues: MQSAIKSVEYDRPLAAGAACGVGEAWAKVPDALAPDERDALKARIKALLVREKAVLVAHYYVDADLQALADETGGCVADSLEMARFGRDHDAHTLVVAGVRFMGETAKILSPGKRVLMPDLDATCSLDLGCLVDEFSQFCDAHPERTVVVYANTSAAVKARADWMVTSSIGLEIVADLHARGEKIIWAPDRHLGGYIQKKTGADMLMWQGSCLVHDEFKGIELDLLRREYPDAKILVHPESPEGVVALADVVGSTTQLIDAAVKLDAQRFIVATDLGILHKMRLAAPGKTFIEAPTAGNSATCKSCAHCPWMAMNALSNLADVLERGHNEIFVEAAIAQRARMPIDRMLDFAARHKQRVQASGDLQRDQALFANVGAA.

His59 and Ser80 together coordinate iminosuccinate. Cys125 is a binding site for [4Fe-4S] cluster. Residues 151 to 153 (YAN) and Ser168 contribute to the iminosuccinate site. Residue Cys212 participates in [4Fe-4S] cluster binding. Residues 238–240 (HPE) and Thr255 each bind iminosuccinate. Cys309 is a [4Fe-4S] cluster binding site.

Belongs to the quinolinate synthase family. Type 1 subfamily. Requires [4Fe-4S] cluster as cofactor.

The protein resides in the cytoplasm. The enzyme catalyses iminosuccinate + dihydroxyacetone phosphate = quinolinate + phosphate + 2 H2O + H(+). Its pathway is cofactor biosynthesis; NAD(+) biosynthesis; quinolinate from iminoaspartate: step 1/1. Functionally, catalyzes the condensation of iminoaspartate with dihydroxyacetone phosphate to form quinolinate. In Burkholderia pseudomallei (strain 1106a), this protein is Quinolinate synthase.